We begin with the raw amino-acid sequence, 210 residues long: MEALGGYPSKSSASRAGLFKVLLSVALCMGSLYLLQNKLSKSRKTKDFYSYEVKDARGRTVSLEKYRGKVSLVVNVASGSELTEQSYRALQELHRELGTSHFNVLAFPCSQYGDTESGTSREIEAFAKSNYGVTFPIFNKIKIMGSEAEPAFRFLTDSVQKIPRWNFWKFLVSPEGQVVRFWKPEEPVSDIRKEATTLVRNIILKKRQEL.

The helical transmembrane segment at Ala13–Leu35 threads the bilayer.

The protein belongs to the glutathione peroxidase family.

The protein localises to the membrane. The catalysed reaction is 2 glutathione + H2O2 = glutathione disulfide + 2 H2O. This is Probable glutathione peroxidase 8 (gpx8) from Danio rerio (Zebrafish).